Consider the following 394-residue polypeptide: Elongation factor Tu 1 (394 aa).

The tr-type G domain maps to 10 to 204; sequence KPHVNVGTIG…HLDTYIPEPE (195 aa). The tract at residues 19–26 is G1; it reads GHVDHGKT. GTP is bound at residue 19–26; it reads GHVDHGKT. Residue Thr26 coordinates Mg(2+). Positions 60–64 are G2; the sequence is GITIN. Positions 81–84 are G3; it reads DCPG. GTP is bound by residues 81–85 and 136–139; these read DCPGH and NKCD. A G4 region spans residues 136–139; it reads NKCD. A G5 region spans residues 174–176; sequence SAL.

Belongs to the TRAFAC class translation factor GTPase superfamily. Classic translation factor GTPase family. EF-Tu/EF-1A subfamily. In terms of assembly, monomer.

It localises to the cytoplasm. The catalysed reaction is GTP + H2O = GDP + phosphate + H(+). GTP hydrolase that promotes the GTP-dependent binding of aminoacyl-tRNA to the A-site of ribosomes during protein biosynthesis. This chain is Elongation factor Tu 1, found in Haemophilus influenzae (strain 86-028NP).